The chain runs to 60 residues: Large ribosomal subunit protein bL32 (60 aa).

A disordered region spans residues 1 to 44; that stretch reads MAVQQNKKSRSARDMRRSHDALEASTLSVEKTTGEVHLRHHVSP. Positions 11-22 are enriched in basic and acidic residues; sequence SARDMRRSHDAL.

It belongs to the bacterial ribosomal protein bL32 family.

The protein is Large ribosomal subunit protein bL32 of Pseudomonas fluorescens (strain SBW25).